The following is a 297-amino-acid chain: UTP--glucose-1-phosphate uridylyltransferase YngB (297 aa).

Positions 1–27 are cleaved as a signal peptide; the sequence is MRKKVRKAVIPAAGLGTRFLPATKAQP.

It belongs to the UDPGP type 2 family. In terms of assembly, homodimer.

The enzyme catalyses alpha-D-glucose 1-phosphate + UTP + H(+) = UDP-alpha-D-glucose + diphosphate. It functions in the pathway glycolipid metabolism; diglucosyl-diacylglycerol biosynthesis. In terms of biological role, catalyzes the formation of UDP-glucose from glucose-1-phosphate and UTP. This is an intermediate step in the biosynthesis of diglucosyl-diacylglycerol (Glc2-DAG), i.e. the predominant glycolipid found in B.subtilis membrane, which is also used as a membrane anchor for lipoteichoic acid (LTA). YngB contributes to wall teichoic acid (WTA) glucosylation and glycolipid formation under anaerobic fermentative growth conditions. Might also enter other glycosylation pathways, leading to the decorating of other cell envelope components with glucose residues under anaerobic or other growth conditions. This Bacillus subtilis (strain 168) protein is UTP--glucose-1-phosphate uridylyltransferase YngB (yngB).